The following is a 423-amino-acid chain: Protein MANNAN SYNTHESIS-RELATED 2 (423 aa).

Residues 1-6 (MGVDLR) lie on the Cytoplasmic side of the membrane. A helical; Signal-anchor for type II membrane protein transmembrane segment spans residues 7–26 (QVVAGILTITMFVMLGQMLH). Topologically, residues 27-423 (RDYFDAVQEK…KNHLAYSCFC (397 aa)) are lumenal. 264 to 266 (DLR) serves as a coordination point for substrate.

It belongs to the glycosyltransferase GT106 family. Widely expressed.

The protein resides in the golgi apparatus membrane. It functions in the pathway glycan biosynthesis. Glycosyltransferase involved in mannan biosynthesis. This Arabidopsis thaliana (Mouse-ear cress) protein is Protein MANNAN SYNTHESIS-RELATED 2.